Here is a 271-residue protein sequence, read N- to C-terminus: Bis(5'-nucleosyl)-tetraphosphatase, symmetrical (271 aa).

Belongs to the Ap4A hydrolase family.

The catalysed reaction is P(1),P(4)-bis(5'-adenosyl) tetraphosphate + H2O = 2 ADP + 2 H(+). Its function is as follows. Hydrolyzes diadenosine 5',5'''-P1,P4-tetraphosphate to yield ADP. This is Bis(5'-nucleosyl)-tetraphosphatase, symmetrical from Aliivibrio fischeri (strain ATCC 700601 / ES114) (Vibrio fischeri).